Here is a 573-residue protein sequence, read N- to C-terminus: Urease subunit alpha 1 (573 aa).

The Urease domain occupies G136 to F573. Residues H141, H143, and K224 each coordinate Ni(2+). K224 bears the N6-carboxylysine mark. A substrate-binding site is contributed by H226. Ni(2+) is bound by residues H253 and H279. H327 (proton donor) is an active-site residue. Ni(2+) is bound at residue D367.

Belongs to the metallo-dependent hydrolases superfamily. Urease alpha subunit family. In terms of assembly, may form a heterohexamer of 3 UreC (alpha) and 3 UreAB (gamma/beta) subunits. May also form a heterotrimer of UreA (gamma), UreB (beta) and UreC (alpha) subunits. Three heterotrimers associate to form the active enzyme. Ni cation is required as a cofactor. Carboxylation allows a single lysine to coordinate two nickel ions.

It localises to the cytoplasm. The enzyme catalyses urea + 2 H2O + H(+) = hydrogencarbonate + 2 NH4(+). It participates in nitrogen metabolism; urea degradation; CO(2) and NH(3) from urea (urease route): step 1/1. This Streptomyces coelicolor (strain ATCC BAA-471 / A3(2) / M145) protein is Urease subunit alpha 1.